Here is a 280-residue protein sequence, read N- to C-terminus: Lysosome-associated membrane glycoprotein 5 (280 aa).

The N-terminal stretch at 1-29 (MDLQGRGVPSIDRLRVLLMLFHTMAQIMA) is a signal peptide. Residues 30 to 235 (EQEVENLSGL…PVDEREQLEE (206 aa)) are Extracellular-facing. Residues Asn35, Asn53, and Asn127 are each glycosylated (N-linked (GlcNAc...) asparagine). The helical transmembrane segment at 236–256 (TLPLILGLILGLVIMVTLAIY) threads the bilayer. At 257 to 280 (HVHHKMTANQVQIPRDRSQYKHMG) the chain is on the cytoplasmic side.

Belongs to the LAMP family. Glycosylated. As to expression, expressed in plasmocytoid dendritic cells. Expressed in suprabasal skin keratinocytes and squamous cells (at protein level). Expressed in the brain and weakly in spleen and skin. Expressed in plasmocytoid dendritic cells.

Its subcellular location is the cell membrane. The protein localises to the cytoplasmic vesicle. The protein resides in the secretory vesicle. It localises to the synaptic vesicle membrane. It is found in the endoplasmic reticulum-Golgi intermediate compartment membrane. Its subcellular location is the endosome membrane. The protein localises to the cytoplasmic vesicle membrane. The protein resides in the cell projection. It localises to the dendrite. It is found in the growth cone membrane. Its subcellular location is the early endosome membrane. The protein localises to the recycling endosome. Plays a role in short-term synaptic plasticity in a subset of GABAergic neurons in the brain. The sequence is that of Lysosome-associated membrane glycoprotein 5 (LAMP5) from Homo sapiens (Human).